Reading from the N-terminus, the 424-residue chain is Steryl acetyl hydrolase 1 (424 aa).

Residue alanine 2 is modified to N-acetylalanine. At 2–45 (AANSGLDSKVEYYRLQENEIISAVSSEDADQNDAGFRLSTIHLH) the chain is on the cytoplasmic side. A helical; Signal-anchor for type II membrane protein transmembrane segment spans residues 46–66 (LFHGLKFAALLFTVVPVFIIL). At 67–424 (DSMKIIFQRK…IARILEFMQS (358 aa)) the chain is on the lumenal side. An N-linked (GlcNAc...) asparagine glycan is attached at asparagine 85. The Involved in the stabilization of the negatively charged intermediate by the formation of the oxyanion hole signature appears at 176-178 (HGG). The active site involves serine 250. N-linked (GlcNAc...) asparagine glycosylation is present at asparagine 283. Histidine 395 is an active-site residue. N-linked (GlcNAc...) asparagine glycosylation is present at asparagine 401.

Belongs to the 'GDXG' lipolytic enzyme family.

Its subcellular location is the endoplasmic reticulum membrane. In terms of biological role, required for the deacetylation of acetylated sterols. Involved in the resistance to eugenol and pregnenolone toxicity. The sequence is that of Steryl acetyl hydrolase 1 (SAY1) from Saccharomyces cerevisiae (strain ATCC 204508 / S288c) (Baker's yeast).